The sequence spans 753 residues: 5-methyltetrahydropteroyltriglutamate--homocysteine methyltransferase (753 aa).

Residues 17 to 20 (RELK) and lysine 117 each bind 5-methyltetrahydropteroyltri-L-glutamate. L-homocysteine contacts are provided by residues 431–433 (IGS) and glutamate 484. L-methionine is bound by residues 431 to 433 (IGS) and glutamate 484. Residues 515–516 (RC) and tryptophan 561 contribute to the 5-methyltetrahydropteroyltri-L-glutamate site. Aspartate 599 serves as a coordination point for L-homocysteine. Residue aspartate 599 participates in L-methionine binding. Glutamate 605 contacts 5-methyltetrahydropteroyltri-L-glutamate. Residues histidine 641, cysteine 643, and glutamate 665 each contribute to the Zn(2+) site. Histidine 694 serves as the catalytic Proton donor. Residue cysteine 726 participates in Zn(2+) binding.

This sequence belongs to the vitamin-B12 independent methionine synthase family. Zn(2+) serves as cofactor.

It carries out the reaction 5-methyltetrahydropteroyltri-L-glutamate + L-homocysteine = tetrahydropteroyltri-L-glutamate + L-methionine. Its pathway is amino-acid biosynthesis; L-methionine biosynthesis via de novo pathway; L-methionine from L-homocysteine (MetE route): step 1/1. Its function is as follows. Catalyzes the transfer of a methyl group from 5-methyltetrahydrofolate to homocysteine resulting in methionine formation. The chain is 5-methyltetrahydropteroyltriglutamate--homocysteine methyltransferase from Escherichia coli (strain SMS-3-5 / SECEC).